A 294-amino-acid polypeptide reads, in one-letter code: 4-hydroxy-tetrahydrodipicolinate synthase (294 aa).

Thr-45 lines the pyruvate pocket. Catalysis depends on Tyr-133, which acts as the Proton donor/acceptor. Lys-161 functions as the Schiff-base intermediate with substrate in the catalytic mechanism. Position 203 (Ile-203) interacts with pyruvate.

The protein belongs to the DapA family. As to quaternary structure, homotetramer; dimer of dimers.

The protein localises to the cytoplasm. The enzyme catalyses L-aspartate 4-semialdehyde + pyruvate = (2S,4S)-4-hydroxy-2,3,4,5-tetrahydrodipicolinate + H2O + H(+). It functions in the pathway amino-acid biosynthesis; L-lysine biosynthesis via DAP pathway; (S)-tetrahydrodipicolinate from L-aspartate: step 3/4. Its function is as follows. Catalyzes the condensation of (S)-aspartate-beta-semialdehyde [(S)-ASA] and pyruvate to 4-hydroxy-tetrahydrodipicolinate (HTPA). This Shewanella frigidimarina (strain NCIMB 400) protein is 4-hydroxy-tetrahydrodipicolinate synthase.